The chain runs to 152 residues: Antiholin-like protein LrgA (152 aa).

A run of 4 helical transmembrane segments spans residues 23–43 (YSIF…KIIE), 45–65 (FMPI…IALC), 77–97 (VGTA…ISVI), and 108–128 (ILII…TGFS).

Belongs to the CidA/LrgA family. LrgA subfamily.

The protein resides in the cell membrane. Functionally, inhibits the expression or activity of extracellular murein hydrolases by interacting, possibly with LrgB, with the holin-like proteins CidA and/or CidB. The LrgAB and CidAB proteins may affect the proton motive force of the membrane. May be involved in programmed cell death (PCD), possibly triggering PCD in response to antibiotics and environmental stresses. This Staphylococcus epidermidis (strain ATCC 12228 / FDA PCI 1200) protein is Antiholin-like protein LrgA.